The following is a 626-amino-acid chain: Chaperone protein HtpG (626 aa).

Positions 1-341 (METKQFKAES…SEDLSLNISR (341 aa)) are a; substrate-binding. A b region spans residues 342-552 (EILQHDRQLK…EGELSIEMEK (211 aa)). Residues 553-626 (VLNAMPNNQN…FTNNICKIMK (74 aa)) are c.

The protein belongs to the heat shock protein 90 family. As to quaternary structure, homodimer.

It localises to the cytoplasm. Molecular chaperone. Has ATPase activity. This is Chaperone protein HtpG from Clostridium botulinum (strain 657 / Type Ba4).